Reading from the N-terminus, the 393-residue chain is Formate-dependent phosphoribosylglycinamide formyltransferase (393 aa).

N(1)-(5-phospho-beta-D-ribosyl)glycinamide contacts are provided by residues 22 to 23 and Glu82; that span reads EL. ATP is bound by residues Arg114, Lys155, 160–165, 195–198, and Glu203; these read SSGKGQ and EGFI. An ATP-grasp domain is found at 119–308; it reads RLAAEELDLP…QFALHARAIL (190 aa). Residues Glu267 and Glu279 each coordinate Mg(2+). N(1)-(5-phospho-beta-D-ribosyl)glycinamide contacts are provided by residues Asp286, Lys356, and 363–364; that span reads RR.

The protein belongs to the PurK/PurT family. As to quaternary structure, homodimer.

The enzyme catalyses N(1)-(5-phospho-beta-D-ribosyl)glycinamide + formate + ATP = N(2)-formyl-N(1)-(5-phospho-beta-D-ribosyl)glycinamide + ADP + phosphate + H(+). It participates in purine metabolism; IMP biosynthesis via de novo pathway; N(2)-formyl-N(1)-(5-phospho-D-ribosyl)glycinamide from N(1)-(5-phospho-D-ribosyl)glycinamide (formate route): step 1/1. Involved in the de novo purine biosynthesis. Catalyzes the transfer of formate to 5-phospho-ribosyl-glycinamide (GAR), producing 5-phospho-ribosyl-N-formylglycinamide (FGAR). Formate is provided by PurU via hydrolysis of 10-formyl-tetrahydrofolate. This Pseudomonas putida (strain ATCC 47054 / DSM 6125 / CFBP 8728 / NCIMB 11950 / KT2440) protein is Formate-dependent phosphoribosylglycinamide formyltransferase.